We begin with the raw amino-acid sequence, 144 residues long: MKFLEFLGKRPPAAAPGPAPAPASAATASERGHAAEDLALAHLQAAGLQLVARNYRTPGRGGGEIDLVLRERDRTLVFVEVRNRSHGAFGGAGGSIGATKQRRIIFAAQHYLRRLPAPPPCRFDVVLVQEQEPVQWIKAAFEAQ.

Positions 11-31 are disordered; the sequence is PPAAAPGPAPAPASAATASER.

This sequence belongs to the UPF0102 family.

The sequence is that of UPF0102 protein Veis_0630 from Verminephrobacter eiseniae (strain EF01-2).